The chain runs to 526 residues: Probable inorganic phosphate transporter 1-3 (526 aa).

Residues 1–21 (MADGQLKVLTTLDHARTQWYH) lie on the Cytoplasmic side of the membrane. The helical transmembrane segment at 22–42 (FMAIVIAGMGFFTDAYDLFCI) threads the bilayer. Residues 43-70 (SLVSKLLGRIYYTDLAGDNPGSLPPNVS) are Extracellular-facing. Residues 71–91 (AAVNGVALCGTLAGQLFFGWL) form a helical membrane-spanning segment. The Cytoplasmic portion of the chain corresponds to 92 to 99 (GDKLGRKS). A helical membrane pass occupies residues 100–120 (VYGFTLVLMVVCSVASGLSFG). The Extracellular segment spans residues 121–124 (RTAK). A helical transmembrane segment spans residues 125-145 (GVVATLCFFRFWLGFGIGGDY). Residues 146 to 163 (PLSATIMSEYANKRTRGA) are Cytoplasmic-facing. Residues 164–184 (FIAAVFAMQGFGILFGAIVAL) form a helical membrane-spanning segment. Over 185 to 211 (VVSAGFRNAYPAPSYADGRAASLVPEA) the chain is Extracellular. A helical membrane pass occupies residues 212-232 (DYVWRIILMFGTVPAALTYYW). The Cytoplasmic portion of the chain corresponds to 233–294 (RMKMPETARY…GLFSRQFVRR (62 aa)). Residues 295 to 315 (HGVHLVATTSTWFLLDIAFYS) form a helical membrane-spanning segment. Topologically, residues 316–349 (QNLFQKDIFSKVGWIPPARTMNAVEEVFRIARAQ) are extracellular. The helical transmembrane segment at 350–370 (ALIALCGTIPGYWFTVAFIDV) threads the bilayer. Topologically, residues 371–373 (AGR) are cytoplasmic. A helical transmembrane segment spans residues 374 to 394 (FAIQLMGFAMMTVFMLGLAAP). The Extracellular portion of the chain corresponds to 395 to 407 (YHHWTTPGNHTGF). A helical membrane pass occupies residues 408–428 (VVMYGFTFFFANFGPNATTFI). The Cytoplasmic segment spans residues 429–444 (VPAEIYPARLRSTCHG). The chain crosses the membrane as a helical span at residues 445 to 465 (ISAAAGKAGAIVGAFGFLYAA). Residues 466–483 (QDPHKPEAGYKPGIGIRN) lie on the Extracellular side of the membrane. The helical transmembrane segment at 484 to 504 (ALFVLAGTNFLGMLMTLLVPE) threads the bilayer. Over 505 to 526 (SKGMSLEEVSKENVADDEEATA) the chain is Cytoplasmic.

This sequence belongs to the major facilitator superfamily. Phosphate:H(+) symporter (TC 2.A.1.9) family. Expressed at low levels in roots.

The protein resides in the membrane. Its function is as follows. High-affinity transporter for external inorganic phosphate. This chain is Probable inorganic phosphate transporter 1-3 (PHT1-3), found in Oryza sativa subsp. japonica (Rice).